Here is a 660-residue protein sequence, read N- to C-terminus: Secretin PulD (660 aa).

The N-terminal stretch at 1-27 (MIIANVIRSFSLTLLIFAALLFRPAAA) is a signal peptide. The interval 28-124 (EEFSASFKGT…VASDAAPGIG (97 aa)) is N0. The N1 stretch occupies residues 126-190 (EVVTRVVPLT…TIVERVDNAG (65 aa)). An N2 region spans residues 191 to 264 (DRSVVTVPLS…MIKQLDRQQA (74 aa)). Positions 267-341 (GNTKVIYLKY…DLERVIAQLD (75 aa)) are N3. Residues 346 to 596 (QVLVEAIIAE…LFIRPTVIRD (251 aa)) form a secretin region. The s domain stretch occupies residues 598 to 660 (DEYRQASSGQ…IDAFNLGGNL (63 aa)).

This sequence belongs to the bacterial secretin family. GSP D subfamily. Forms a cylindrical channel with 15 subunits.

Its subcellular location is the cell outer membrane. Functionally, involved in a type II secretion system (T2SS, formerly general secretion pathway, GSP) for the export of proteins. Required for the translocation of pullulanase. This subunit forms the outer membrane channel. The chain is Secretin PulD (pulD) from Klebsiella pneumoniae.